A 2554-amino-acid polypeptide reads, in one-letter code: DnaJ homolog subfamily C GRV2 (2554 aa).

2 disordered regions span residues 746-766 (DVVD…KRLL) and 810-833 (QRRA…GVDS). Residues 815–825 (DSSSEASNPQA) show a composition bias toward polar residues. 2 coiled-coil regions span residues 925 to 951 (TRQE…EDIS) and 1518 to 1546 (RTAS…LKRQ). The 83-residue stretch at 1524–1606 (LNEEISNISK…AQCILYRRYG (83 aa)) folds into the J domain. 2 disordered regions span residues 1960-1994 (IEDR…SSEG) and 2339-2366 (SGEV…GQTP). Polar residues predominate over residues 1966 to 1977 (SNDTPELQSSVA). Residues 1982-1994 (IEEHSDHQPSSEG) are compositionally biased toward basic and acidic residues. The span at 2352–2366 (VNESTDPSSLPGQTP) shows a compositional bias: polar residues.

In terms of tissue distribution, constitutively expressed in roots, hypocotyls, leaves (e.g. vascular tissues), stems, flowers (e.g. petals and stigmas), siliques and pollen.

It is found in the endosome membrane. Required for endosome formation, vacuolar protein sorting and determination of the embryo growth axis. Necessary for the transport of proteins into protein storage vacuoles (PSVs). Participates in vesicle trafficking from the endosome to the central vacuole. Involved in the regulation of shoot phototropism and gravitropism, probably through the positioning of specialized amyloplasts (statoliths) in endodermal cells. This is DnaJ homolog subfamily C GRV2 (GRV2) from Arabidopsis thaliana (Mouse-ear cress).